Consider the following 358-residue polypeptide: MSVCYRPPGNETLLSWKTSRATGTAFLLLAALLGLPGNGFVVWSLAGWRPARGRPLAATLVLHLALADGAVLLLTPLFVAFLTRQAWPLGQAGCKAVYYVCALSMYASVLLTGLLSLQRCLAVTRPFLAPRLRSPALARRLLLAVWLAALLLAVPAAVYRHLWRDRVCQLCHPSPVHAAAHLSLETLTAFVLPFGLMLGCYSVTLARLRGARWGSGRHGARVGRLVSAIVLAFGLLWAPYHAVNLLQAVAALAPPEGALAKLGGAGQAARAGTTALAFFSSSVNPVLYVFTAGDLLPRAGPRFLTRLFEGSGEARGGGRSREGTMELRTTPQLKVVGQGRGNGDPGGGMEKDGPEWDL.

The Extracellular segment spans residues 1-24 (MSVCYRPPGNETLLSWKTSRATGT). N-linked (GlcNAc...) asparagine glycosylation occurs at Asn-10. Residues 25-45 (AFLLLAALLGLPGNGFVVWSL) traverse the membrane as a helical segment. Residues 46-60 (AGWRPARGRPLAATL) are Cytoplasmic-facing. Residues 61–81 (VLHLALADGAVLLLTPLFVAF) traverse the membrane as a helical segment. Residues 82 to 96 (LTRQAWPLGQAGCKA) are Extracellular-facing. The helical transmembrane segment at 97–117 (VYYVCALSMYASVLLTGLLSL) threads the bilayer. The Cytoplasmic segment spans residues 118 to 140 (QRCLAVTRPFLAPRLRSPALARR). Residues 141–161 (LLLAVWLAALLLAVPAAVYRH) traverse the membrane as a helical segment. Residues 162 to 185 (LWRDRVCQLCHPSPVHAAAHLSLE) are Extracellular-facing. Residues 186-206 (TLTAFVLPFGLMLGCYSVTLA) form a helical membrane-spanning segment. The Cytoplasmic portion of the chain corresponds to 207–224 (RLRGARWGSGRHGARVGR). A helical membrane pass occupies residues 225 to 245 (LVSAIVLAFGLLWAPYHAVNL). Topologically, residues 246–275 (LQAVAALAPPEGALAKLGGAGQAARAGTTA) are extracellular. Residues 276-296 (LAFFSSSVNPVLYVFTAGDLL) form a helical membrane-spanning segment. Residues 297–358 (PRAGPRFLTR…MEKDGPEWDL (62 aa)) are Cytoplasmic-facing. Residues 311 to 358 (SGEARGGGRSREGTMELRTTPQLKVVGQGRGNGDPGGGMEKDGPEWDL) form a disordered region. The segment covering 338–348 (QGRGNGDPGGG) has biased composition (gly residues). Residues 349-358 (MEKDGPEWDL) are compositionally biased toward basic and acidic residues.

The protein belongs to the G-protein coupled receptor 1 family. In terms of tissue distribution, widely expressed.

It is found in the cell membrane. Low-affinity receptor for leukotrienes including leukotriene B4. Mediates chemotaxis of granulocytes and macrophages. The response is mediated via G-proteins that activate a phosphatidylinositol-calcium second messenger system. The rank order of affinities for the leukotrienes is LTB4 &gt; 12-epi-LTB4 &gt; LTB5 &gt; LTB3. The sequence is that of Leukotriene B4 receptor 2 (LTB4R2) from Homo sapiens (Human).